Reading from the N-terminus, the 2431-residue chain is Nucleoprotein TPR (2431 aa).

The interval 1–48 (MTSGGSASRSGHRGVPMTSRGFDGSRRGSLRRAGARETASEAADGAAP) is disordered. A sufficient for interaction with TPR region spans residues 77-87 (AVLQQVLERPE). The necessary for interaction with HSF1 stretch occupies residues 88-191 (LNKLPKSTQN…GIQSQFTRAK (104 aa)). A coiled-coil region spans residues 98–444 (KLEKFLAEQQ…SATKRKGAIL (347 aa)). An N6-acetyllysine mark is found at Lys-326, Lys-386, and Lys-419. A Phosphoserine modification is found at Ser-453. Positions 486–678 (EKQENKRINK…ESRQHQMQLV (193 aa)) form a coiled coil. 3 positions are modified to N6-acetyllysine: Lys-502, Lys-531, and Lys-551. Residues 511–587 (LKRQREEYER…LMELEEARGN (77 aa)) form a necessary for association to the NPC region. 3 positions are modified to phosphoserine: Ser-596, Ser-597, and Ser-706. A coiled-coil region spans residues 736–1246 (STEAIEAKAA…IEKLSDKVVT (511 aa)). Lys-787, Lys-797, Lys-822, and Lys-829 each carry N6-acetyllysine. Polar residues predominate over residues 989 to 998 (LASQSTQRTG). A disordered region spans residues 989 to 1011 (LASQSTQRTGKGQPGDRDDVDDL). Positions 1002-1011 (PGDRDDVDDL) are enriched in basic and acidic residues. The residue at position 1259 (Ser-1259) is a Phosphoserine. Coiled-coil stretches lie at residues 1289 to 1494 (EVAQ…LDAK) and 1547 to 1700 (VQEM…QRDE). The necessary for interaction with HSF1 stretch occupies residues 1292 to 1394 (QVESLRYRQR…NAELSEKSGM (103 aa)). Residues 1689–1701 (EHQERHLEQRDEP) are compositionally biased toward basic and acidic residues. The segment at 1689–1744 (EHQERHLEQRDEPQEPTNKAPEQQRQITLKTTPASGERGIASTSDPPTANIKPTPV) is disordered. Residues 1703-1722 (EPTNKAPEQQRQITLKTTPA) are compositionally biased toward polar residues. The residue at position 1760 (Lys-1760) is an N6-acetyllysine. At Thr-1762 the chain carries Phosphothreonine. The segment covering 1873 to 1898 (SSPVERPSTSTAVFGTVSATPSSSLP) has biased composition (polar residues). The tract at residues 1873 to 2193 (SSPVERPSTS…TPGIGGMQQH (321 aa)) is disordered. Residues 1882-1937 (STAVFGTVSATPSSSLPKRTREEEEDSTMEAGDQVSEDTVEMPLPKKLKMVTPVGT) are sufficient and essential for mediating its nuclear import. The segment covering 1937–1951 (TEEEVMAEESTDGEA) has biased composition (acidic residues). Residues 1954 to 1963 (QAYNQDSQDS) are compositionally biased toward polar residues. The residue at position 1963 (Ser-1963) is a Phosphoserine. Residues 1994 to 2005 (QSDQQTTSSQDG) show a composition bias toward low complexity. 2 stretches are compositionally biased toward acidic residues: residues 2016 to 2057 (DSDD…EDSN) and 2067 to 2088 (DGYEADDAEGGDGTDPGTETEE). Positions 2100 to 2132 (ADSQNSGEGNTSAAESSFSQEVAREQQPTSASE) are enriched in polar residues. Phosphoserine occurs at positions 2102, 2105, 2116, 2118, and 2141. Residues Arg-2174 and Arg-2179 each carry the omega-N-methylarginine modification. Residues Thr-2184 and Thr-2205 each carry the phosphothreonine modification. At Ser-2223 the chain carries Phosphoserine. Arg-2231 is subject to Omega-N-methylarginine. Residues 2295–2312 (ESTTSDASEHASQSVPMV) are compositionally biased toward polar residues. The segment at 2295–2431 (ESTTSDASEH…RGGINRGNIN (137 aa)) is disordered. The span at 2313–2325 (TTSTGTLSTTNET) shows a compositional bias: low complexity. A compositionally biased stretch (acidic residues) spans 2327–2340 (AGDDGDEVFVEAES). A compositionally biased stretch (low complexity) spans 2341–2351 (EGISSEAGLEI). Over residues 2353–2367 (SQQEEEPVQASDESD) the composition is skewed to acidic residues. Over residues 2368-2388 (LPSTSQDPPSSSSVDTSSSQP) the composition is skewed to low complexity. Residues Arg-2411, Arg-2413, and Arg-2422 each carry the asymmetric dimethylarginine modification. Gly residues predominate over residues 2420–2431 (GGRGGINRGNIN).

Belongs to the TPR family. Homodimer. Part of the nuclear pore complex (NPC). Associates with the XPO1/CRM1-mediated nuclear export complex, the Importin alpha/Importin beta receptor and the dynein 1 complex. Interacts (via C-terminal domain) with the KPNB1; the interaction occurs in a RanGTP-dependent manner. Interacts (via C-terminal region and phosphorylated form) with MAPK1/ERK2 (via phosphorylated form); the interaction requires dimerization of MAPK1/ERK2 and increases following EGF stimulation. Interacts with MAPK3/ERK1; the interaction increases following EGF stimulation. Interacts (via coiled coil region) with NUP153; the interaction is direct. Interacts with HSF1; the interaction increases in a stress-responsive manner and stimulates export of stress-induced HSP70 mRNA. Interacts with huntingtin/HTT; the interaction is inhibited by aggregated huntingtin/HTT forms with expanded polyglutamine stretch. Interacts with MAD1L1 (via N-terminal region), MAD2L1, and TTK; the interactions occurs in a microtubule-independent manner. Interacts (via middle region) with DYNLL1. Interacts with DCTN1, dynein, NUP153 and tubulin. Interacts with MTA1. Interacts with IFI204 (via C-terminal region). Interacts with IFI203. Interacts with ZC3HC1; this interaction mediates ZC3HC1 nuclear envelopes (NE)-association but also required for proper positioning of a substantial amount of TPR at the nuclear basket (NB). Post-translationally, phosphorylated. Phosphorylation occurs on serine and threonine residues (comprised in the C-terminal region) by MAPK1/ERK2 and stabilizes the interaction between these two proteins. Expressed in the heart, liver, kidney, spleen, lung and skeletal muscles.

Its subcellular location is the nucleus. The protein localises to the nucleus membrane. It localises to the nucleus envelope. It is found in the nuclear pore complex. The protein resides in the cytoplasm. Its subcellular location is the cytoskeleton. The protein localises to the spindle. It localises to the chromosome. It is found in the centromere. The protein resides in the kinetochore. Its function is as follows. Component of the nuclear pore complex (NPC), a complex required for the trafficking across the nuclear envelope. Functions as a scaffolding element in the nuclear phase of the NPC essential for normal nucleocytoplasmic transport of proteins and mRNAs, plays a role in the establishment of nuclear-peripheral chromatin compartmentalization in interphase, and in the mitotic spindle checkpoint signaling during mitosis. Involved in the quality control and retention of unspliced mRNAs in the nucleus; in association with NUP153, regulates the nuclear export of unspliced mRNA species bearing constitutive transport element (CTE) in a NXF1- and KHDRBS1-independent manner. Negatively regulates both the association of CTE-containing mRNA with large polyribosomes and translation initiation. Does not play any role in Rev response element (RRE)-mediated export of unspliced mRNAs. Implicated in nuclear export of mRNAs transcribed from heat shock gene promoters; associates both with chromatin in the HSP70 promoter and with mRNAs transcribed from this promoter under stress-induced conditions. Plays a limited role in the regulation of nuclear protein export. Modulates the nucleocytoplasmic transport of activated MAPK1/ERK2 and huntingtin/HTT and may serve as a docking site for the XPO1/CRM1-mediated nuclear export complex. Also plays a role as a structural and functional element of the perinuclear chromatin distribution; involved in the formation and/or maintenance of NPC-associated perinuclear heterochromatin exclusion zones (HEZs). Finally, acts as a spatial regulator of the spindle-assembly checkpoint (SAC) response ensuring a timely and effective recruitment of spindle checkpoint proteins like MAD1L1 and MAD2L1 to unattached kinetochore during the metaphase-anaphase transition before chromosome congression. Its N-terminus is involved in activation of oncogenic kinases. The chain is Nucleoprotein TPR from Mus musculus (Mouse).